The sequence spans 96 residues: Large ribosomal subunit protein bL28 (96 aa).

The interval 1–24 is disordered; the sequence is MSRSCELTGKGVQSGHNVSHANNK.

The protein belongs to the bacterial ribosomal protein bL28 family.

This is Large ribosomal subunit protein bL28 from Sinorhizobium fredii (strain NBRC 101917 / NGR234).